Consider the following 269-residue polypeptide: Small ribosomal subunit protein eS1 (269 aa).

Disordered regions lie at residues 1–20 (MAVG…SKKK) and 249–269 (AASG…QESV).

Belongs to the eukaryotic ribosomal protein eS1 family. As to quaternary structure, component of the small ribosomal subunit. Mature ribosomes consist of a small (40S) and a large (60S) subunit. The 40S subunit contains about 33 different proteins and 1 molecule of RNA (18S). The 60S subunit contains about 49 different proteins and 3 molecules of RNA (28S, 5.8S and 5S).

It is found in the cytoplasm. The chain is Small ribosomal subunit protein eS1 from Anopheles darlingi (Mosquito).